Here is an 807-residue protein sequence, read N- to C-terminus: Glycerol-3-phosphate acyltransferase (807 aa).

The HXXXXD motif signature appears at 308–313 (CHRSHM).

This sequence belongs to the GPAT/DAPAT family.

It localises to the cell inner membrane. It catalyses the reaction sn-glycerol 3-phosphate + an acyl-CoA = a 1-acyl-sn-glycero-3-phosphate + CoA. Its pathway is phospholipid metabolism; CDP-diacylglycerol biosynthesis; CDP-diacylglycerol from sn-glycerol 3-phosphate: step 1/3. This chain is Glycerol-3-phosphate acyltransferase, found in Shewanella putrefaciens (strain CN-32 / ATCC BAA-453).